The chain runs to 315 residues: Methionyl-tRNA formyltransferase (315 aa).

(6S)-5,6,7,8-tetrahydrofolate is bound at residue 113-116 (SLLP).

It belongs to the Fmt family.

The enzyme catalyses L-methionyl-tRNA(fMet) + (6R)-10-formyltetrahydrofolate = N-formyl-L-methionyl-tRNA(fMet) + (6S)-5,6,7,8-tetrahydrofolate + H(+). Functionally, attaches a formyl group to the free amino group of methionyl-tRNA(fMet). The formyl group appears to play a dual role in the initiator identity of N-formylmethionyl-tRNA by promoting its recognition by IF2 and preventing the misappropriation of this tRNA by the elongation apparatus. This is Methionyl-tRNA formyltransferase from Escherichia coli O139:H28 (strain E24377A / ETEC).